The following is a 75-amino-acid chain: UPF0270 protein PP_1747 (75 aa).

This sequence belongs to the UPF0270 family.

In Pseudomonas putida (strain ATCC 47054 / DSM 6125 / CFBP 8728 / NCIMB 11950 / KT2440), this protein is UPF0270 protein PP_1747.